A 61-amino-acid polypeptide reads, in one-letter code: Small ribosomal subunit protein uS14 (61 aa).

The Zn(2+) site is built by Cys-24, Cys-27, Cys-40, and Cys-43.

Belongs to the universal ribosomal protein uS14 family. Zinc-binding uS14 subfamily. Part of the 30S ribosomal subunit. Contacts proteins S3 and S10. Zn(2+) is required as a cofactor.

Binds 16S rRNA, required for the assembly of 30S particles and may also be responsible for determining the conformation of the 16S rRNA at the A site. The protein is Small ribosomal subunit protein uS14 of Fervidobacterium nodosum (strain ATCC 35602 / DSM 5306 / Rt17-B1).